Here is a 146-residue protein sequence, read N- to C-terminus: Ribosome-binding factor A (146 aa).

The disordered stretch occupies residues 122 to 146 (QQQFGSVDDVTENDIDEADDTEGKA). The segment covering 130 to 146 (DVTENDIDEADDTEGKA) has biased composition (acidic residues).

The protein belongs to the RbfA family. As to quaternary structure, monomer. Binds 30S ribosomal subunits, but not 50S ribosomal subunits or 70S ribosomes.

It is found in the cytoplasm. Its function is as follows. One of several proteins that assist in the late maturation steps of the functional core of the 30S ribosomal subunit. Associates with free 30S ribosomal subunits (but not with 30S subunits that are part of 70S ribosomes or polysomes). Required for efficient processing of 16S rRNA. May interact with the 5'-terminal helix region of 16S rRNA. This is Ribosome-binding factor A from Shewanella sp. (strain MR-7).